Consider the following 1322-residue polypeptide: Phosphoribosylformylglycinamidine synthase (1322 aa).

ATP-binding positions include 300–311 (GASTGAGGEIRD) and alanine 702. Residues aspartate 703, glutamate 742, asparagine 746, and aspartate 915 each coordinate Mg(2+). ATP is bound at residue serine 917. Residues 1073 to 1322 (VAILREQGIN…LFRNARAWVG (250 aa)) form the Glutamine amidotransferase type-1 domain. The Nucleophile role is filled by cysteine 1166. Catalysis depends on residues histidine 1287 and glutamate 1289.

In the N-terminal section; belongs to the FGAMS family. Monomer.

The protein localises to the cytoplasm. The enzyme catalyses N(2)-formyl-N(1)-(5-phospho-beta-D-ribosyl)glycinamide + L-glutamine + ATP + H2O = 2-formamido-N(1)-(5-O-phospho-beta-D-ribosyl)acetamidine + L-glutamate + ADP + phosphate + H(+). It participates in purine metabolism; IMP biosynthesis via de novo pathway; 5-amino-1-(5-phospho-D-ribosyl)imidazole from N(2)-formyl-N(1)-(5-phospho-D-ribosyl)glycinamide: step 1/2. Its function is as follows. Phosphoribosylformylglycinamidine synthase involved in the purines biosynthetic pathway. Catalyzes the ATP-dependent conversion of formylglycinamide ribonucleotide (FGAR) and glutamine to yield formylglycinamidine ribonucleotide (FGAM) and glutamate. The sequence is that of Phosphoribosylformylglycinamidine synthase from Xylella fastidiosa (strain Temecula1 / ATCC 700964).